The primary structure comprises 582 residues: Mitogen-activated protein kinase 17 (582 aa).

The interval 22–61 is disordered; that stretch reads SSSFHLTTTGDDTVKDLHDPRREDAEGDGWEEVHEGPESD. A compositionally biased stretch (basic and acidic residues) spans 33-45; sequence DTVKDLHDPRRED. The region spanning 105–396 is the Protein kinase domain; sequence YKVSEVIGKG…AEEALTDPYF (292 aa). ATP contacts are provided by residues 111 to 119 and K134; that span reads IGKGSYGVV. D231 functions as the Proton acceptor in the catalytic mechanism. Position 267 is a phosphothreonine (T267). The short motif at 267–269 is the TXY element; it reads TDY. Y269 is subject to Phosphotyrosine. Disordered stretches follow at residues 474–502 and 542–582; these read EGVSKGEKSSPQLRQNASLPRERAIGNKH and ISAS…QLKT. Polar residues predominate over residues 482-491; it reads SSPQLRQNAS. The segment covering 493–502 has biased composition (basic and acidic residues); the sequence is PRERAIGNKH. Residues 557–572 are compositionally biased toward acidic residues; sequence DQEDSLTESMDETADE.

This sequence belongs to the protein kinase superfamily. CMGC Ser/Thr protein kinase family. MAP kinase subfamily. In terms of processing, dually phosphorylated on Thr-267 and Tyr-269, which activates the enzyme.

The enzyme catalyses L-seryl-[protein] + ATP = O-phospho-L-seryl-[protein] + ADP + H(+). It catalyses the reaction L-threonyl-[protein] + ATP = O-phospho-L-threonyl-[protein] + ADP + H(+). Its activity is regulated as follows. Activated by threonine and tyrosine phosphorylation. In Oryza sativa subsp. japonica (Rice), this protein is Mitogen-activated protein kinase 17 (MPK17).